The chain runs to 255 residues: Small ribosomal subunit protein uS2 (255 aa).

The segment at 226–255 (QGVSNEEVAAEQNIDLDEKEKSEETEATEE) is disordered.

It belongs to the universal ribosomal protein uS2 family.

This Staphylococcus aureus (strain JH1) protein is Small ribosomal subunit protein uS2.